A 510-amino-acid chain; its full sequence is Lysine--tRNA ligase (510 aa).

Mg(2+) contacts are provided by Glu420 and Glu427.

This sequence belongs to the class-II aminoacyl-tRNA synthetase family. As to quaternary structure, homodimer. The cofactor is Mg(2+).

The protein resides in the cytoplasm. It carries out the reaction tRNA(Lys) + L-lysine + ATP = L-lysyl-tRNA(Lys) + AMP + diphosphate. This chain is Lysine--tRNA ligase, found in Vibrio vulnificus (strain YJ016).